The primary structure comprises 333 residues: Glyceraldehyde-3-phosphate dehydrogenase (333 aa).

NAD(+)-binding positions include 11–12 (RI), Asp33, Arg78, and Ser120. D-glyceraldehyde 3-phosphate contacts are provided by residues 149 to 151 (SCT), Thr180, 209 to 210 (TG), and Arg232. The Nucleophile role is filled by Cys150. The residue at position 150 (Cys150) is an S-nitrosocysteine. Asn314 serves as a coordination point for NAD(+).

The protein belongs to the glyceraldehyde-3-phosphate dehydrogenase family. As to quaternary structure, homotetramer. Post-translationally, S-nitrosylation of Cys-150 leads to translocation to the nucleus.

It is found in the cytoplasm. The protein localises to the cytosol. The protein resides in the cytoskeleton. Its subcellular location is the nucleus. The catalysed reaction is D-glyceraldehyde 3-phosphate + phosphate + NAD(+) = (2R)-3-phospho-glyceroyl phosphate + NADH + H(+). It carries out the reaction S-nitroso-L-cysteinyl-[GAPDH] + L-cysteinyl-[protein] = L-cysteinyl-[GAPDH] + S-nitroso-L-cysteinyl-[protein]. Its pathway is carbohydrate degradation; glycolysis; pyruvate from D-glyceraldehyde 3-phosphate: step 1/5. Has both glyceraldehyde-3-phosphate dehydrogenase and nitrosylase activities, thereby playing a role in glycolysis and nuclear functions, respectively. Glyceraldehyde-3-phosphate dehydrogenase is a key enzyme in glycolysis that catalyzes the first step of the pathway by converting D-glyceraldehyde 3-phosphate (G3P) into 3-phospho-D-glyceroyl phosphate. Participates in nuclear events including transcription, RNA transport, DNA replication and apoptosis. Nuclear functions are probably due to the nitrosylase activity that mediates cysteine S-nitrosylation of nuclear target proteins such as SIRT1, HDAC2 and PRKDC. This is Glyceraldehyde-3-phosphate dehydrogenase from Danio rerio (Zebrafish).